Here is a 353-residue protein sequence, read N- to C-terminus: Photosystem II D2 protein (353 aa).

Threonine 2 is modified (N-acetylthreonine). Phosphothreonine is present on threonine 2. The chain crosses the membrane as a helical span at residues 41 to 61 (CAYFALGGWFTGTTFVTSWYT). Histidine 118 serves as a coordination point for chlorophyll a. A helical membrane pass occupies residues 125-141 (GFMLRQFEIARSVQLRP). Residues glutamine 130 and asparagine 143 each contribute to the pheophytin a site. Residues 153–166 (VFVSVFLIYPLGQS) traverse the membrane as a helical segment. Histidine 198 is a chlorophyll a binding site. Residues 208 to 228 (AALLCAIHGATVENTLFEDGD) traverse the membrane as a helical segment. Residues histidine 215 and phenylalanine 262 each coordinate a plastoquinone. Residue histidine 215 participates in Fe cation binding. Histidine 269 lines the Fe cation pocket. The chain crosses the membrane as a helical span at residues 279-295 (GLWMSALGVVGLALNLR).

This sequence belongs to the reaction center PufL/M/PsbA/D family. As to quaternary structure, PSII is composed of 1 copy each of membrane proteins PsbA, PsbB, PsbC, PsbD, PsbE, PsbF, PsbH, PsbI, PsbJ, PsbK, PsbL, PsbM, PsbT, PsbX, PsbY, PsbZ, Psb30/Ycf12, at least 3 peripheral proteins of the oxygen-evolving complex and a large number of cofactors. It forms dimeric complexes. Requires The D1/D2 heterodimer binds P680, chlorophylls that are the primary electron donor of PSII, and subsequent electron acceptors. It shares a non-heme iron and each subunit binds pheophytin, quinone, additional chlorophylls, carotenoids and lipids. There is also a Cl(-1) ion associated with D1 and D2, which is required for oxygen evolution. The PSII complex binds additional chlorophylls, carotenoids and specific lipids. as cofactor.

The protein localises to the plastid. Its subcellular location is the chloroplast thylakoid membrane. The catalysed reaction is 2 a plastoquinone + 4 hnu + 2 H2O = 2 a plastoquinol + O2. Its function is as follows. Photosystem II (PSII) is a light-driven water:plastoquinone oxidoreductase that uses light energy to abstract electrons from H(2)O, generating O(2) and a proton gradient subsequently used for ATP formation. It consists of a core antenna complex that captures photons, and an electron transfer chain that converts photonic excitation into a charge separation. The D1/D2 (PsbA/PsbD) reaction center heterodimer binds P680, the primary electron donor of PSII as well as several subsequent electron acceptors. D2 is needed for assembly of a stable PSII complex. This chain is Photosystem II D2 protein, found in Oenothera argillicola (Appalachian evening primrose).